Reading from the N-terminus, the 434-residue chain is Trigger factor (434 aa).

Positions 161–246 (EDRVTVDFSG…LKKVEERELP (86 aa)) constitute a PPIase FKBP-type domain.

This sequence belongs to the FKBP-type PPIase family. Tig subfamily.

Its subcellular location is the cytoplasm. The enzyme catalyses [protein]-peptidylproline (omega=180) = [protein]-peptidylproline (omega=0). Functionally, involved in protein export. Acts as a chaperone by maintaining the newly synthesized protein in an open conformation. Functions as a peptidyl-prolyl cis-trans isomerase. The chain is Trigger factor from Serratia proteamaculans (strain 568).